The chain runs to 456 residues: Bifunctional protein GlmU (456 aa).

The segment at 1-229 (MLNNTMSVVI…ISETDGVNNR (229 aa)) is pyrophosphorylase. Residues 11-14 (LAAG), Lys-25, Gln-76, 81-82 (GT), 103-105 (YGD), Gly-140, Glu-154, Asn-169, and Asn-227 each bind UDP-N-acetyl-alpha-D-glucosamine. A Mg(2+)-binding site is contributed by Asp-105. Asn-227 is a Mg(2+) binding site. The interval 230–250 (LQLSRLERIYQAEQAEKLLLA) is linker. Residues 251–456 (GVMLRDPARF…QGWQRPVKKK (206 aa)) form an N-acetyltransferase region. UDP-N-acetyl-alpha-D-glucosamine is bound by residues Arg-333 and Lys-351. The active-site Proton acceptor is the His-363. Residues Tyr-366 and Asn-377 each contribute to the UDP-N-acetyl-alpha-D-glucosamine site. Acetyl-CoA-binding positions include Ala-380, 386 to 387 (NY), Ser-405, Ala-423, and Arg-440.

This sequence in the N-terminal section; belongs to the N-acetylglucosamine-1-phosphate uridyltransferase family. It in the C-terminal section; belongs to the transferase hexapeptide repeat family. Homotrimer. Mg(2+) is required as a cofactor.

It is found in the cytoplasm. It carries out the reaction alpha-D-glucosamine 1-phosphate + acetyl-CoA = N-acetyl-alpha-D-glucosamine 1-phosphate + CoA + H(+). It catalyses the reaction N-acetyl-alpha-D-glucosamine 1-phosphate + UTP + H(+) = UDP-N-acetyl-alpha-D-glucosamine + diphosphate. Its pathway is nucleotide-sugar biosynthesis; UDP-N-acetyl-alpha-D-glucosamine biosynthesis; N-acetyl-alpha-D-glucosamine 1-phosphate from alpha-D-glucosamine 6-phosphate (route II): step 2/2. It functions in the pathway nucleotide-sugar biosynthesis; UDP-N-acetyl-alpha-D-glucosamine biosynthesis; UDP-N-acetyl-alpha-D-glucosamine from N-acetyl-alpha-D-glucosamine 1-phosphate: step 1/1. The protein operates within bacterial outer membrane biogenesis; LPS lipid A biosynthesis. Catalyzes the last two sequential reactions in the de novo biosynthetic pathway for UDP-N-acetylglucosamine (UDP-GlcNAc). The C-terminal domain catalyzes the transfer of acetyl group from acetyl coenzyme A to glucosamine-1-phosphate (GlcN-1-P) to produce N-acetylglucosamine-1-phosphate (GlcNAc-1-P), which is converted into UDP-GlcNAc by the transfer of uridine 5-monophosphate (from uridine 5-triphosphate), a reaction catalyzed by the N-terminal domain. In Enterobacter sp. (strain 638), this protein is Bifunctional protein GlmU.